The following is a 232-amino-acid chain: 5'-methylthioadenosine/S-adenosylhomocysteine nucleosidase (232 aa).

E12 acts as the Proton acceptor in catalysis. Substrate is bound by residues G78, I152, and 173 to 174 (ME). The Proton donor role is filled by D197.

It belongs to the PNP/UDP phosphorylase family. MtnN subfamily. In terms of assembly, homodimer.

It carries out the reaction S-adenosyl-L-homocysteine + H2O = S-(5-deoxy-D-ribos-5-yl)-L-homocysteine + adenine. The catalysed reaction is S-methyl-5'-thioadenosine + H2O = 5-(methylsulfanyl)-D-ribose + adenine. It catalyses the reaction 5'-deoxyadenosine + H2O = 5-deoxy-D-ribose + adenine. It participates in amino-acid biosynthesis; L-methionine biosynthesis via salvage pathway; S-methyl-5-thio-alpha-D-ribose 1-phosphate from S-methyl-5'-thioadenosine (hydrolase route): step 1/2. Functionally, catalyzes the irreversible cleavage of the glycosidic bond in both 5'-methylthioadenosine (MTA) and S-adenosylhomocysteine (SAH/AdoHcy) to adenine and the corresponding thioribose, 5'-methylthioribose and S-ribosylhomocysteine, respectively. Also cleaves 5'-deoxyadenosine, a toxic by-product of radical S-adenosylmethionine (SAM) enzymes, into 5-deoxyribose and adenine. Thus, is required for in vivo function of the radical SAM enzymes biotin synthase and lipoic acid synthase, that are inhibited by 5'-deoxyadenosine accumulation. The protein is 5'-methylthioadenosine/S-adenosylhomocysteine nucleosidase of Escherichia coli O9:H4 (strain HS).